Here is a 277-residue protein sequence, read N- to C-terminus: Outer kinetochore KNL1 complex subunit ZWINT (277 aa).

The segment at alanine 80–glutamine 155 is interaction with NDC80 and ZW10. Residues arginine 104–tyrosine 217 adopt a coiled-coil conformation. The interval alanine 228–proline 277 is disordered. Residues glutamine 241–aspartate 253 are compositionally biased toward polar residues.

Component of the KNL1 complex composed of KNL1 and ZWINT. Part of the ten-subunit outer kinetochore KMN network that includes the KNL1, MIS12 and NDC80 complexes; a bioriented kinetochore contains approximately 150 copies of the network. Interacts with the MIS12 complex subunits MIS12 DSN1, and PMF1. Interacts with the NDC80 complex subunit NDC80 during mitosis. Interacts with ZW10. Interacts with CETN3.

The protein resides in the nucleus. The protein localises to the chromosome. Its subcellular location is the centromere. It is found in the kinetochore. Functionally, acts as a component of the outer kinetochore KNL1 complex that serves as a docking point for spindle assembly checkpoint components and mediates microtubule-kinetochore interactions. Kinetochores, consisting of a centromere-associated inner segment and a microtubule-contacting outer segment, play a crucial role in chromosome segregation by mediating the physical connection between centromeric DNA and spindle microtubules. The outer kinetochore is made up of the ten-subunit KMN network, comprising the MIS12, NDC80 and KNL1 complexes, and auxiliary microtubule-associated components; together they connect the outer kinetochore with the inner kinetochore, bind microtubules, and mediate interactions with mitotic checkpoint proteins that delay anaphase until chromosomes are bioriented on the spindle. Targets the RZZ complex to the kinetochore at prometaphase. Recruits MAD2L1 to the kinetochore, but is not required for BUB1B localization. In addition to orienting mitotic chromosomes, it is also essential for alignment of homologous chromosomes during meiotic metaphase I. In meiosis I, required to activate the spindle assembly checkpoint at unattached kinetochores to correct erroneous kinetochore-microtubule attachments. The sequence is that of Outer kinetochore KNL1 complex subunit ZWINT (ZWINT) from Homo sapiens (Human).